The following is a 151-amino-acid chain: MSTPENRPVSFFSLFRRGQHYSKTWPTDKRLAPVFIENRVIRATRFAIRIMPPVAVFTLCWQIALGGQLGPAVATALFALSMPMQGLWWLGKRSVTPLPPGTLNWFYEVRTKLQEAGQALAPVEGKPDYQALADTLKRAFKQLDKTFLDDL.

The next 2 membrane-spanning stretches (helical) occupy residues phenylalanine 46 to leucine 65 and leucine 69 to glycine 91.

It belongs to the UPF0208 family.

It is found in the cell inner membrane. The protein is UPF0208 membrane protein ESA_00924 of Cronobacter sakazakii (strain ATCC BAA-894) (Enterobacter sakazakii).